The primary structure comprises 930 residues: uncharacterized protein (930 aa).

Residues 434–441 (IRRGISRK) carry the Nuclear localization signal motif.

The protein localises to the nucleus. This is an uncharacterized protein from Chaetomium thermophilum (strain DSM 1495 / CBS 144.50 / IMI 039719) (Thermochaetoides thermophila).